We begin with the raw amino-acid sequence, 198 residues long: Recombination protein RecR (198 aa).

The segment at 57-72 (CSVCGNLTDEDPCAIC) adopts a C4-type zinc-finger fold. The Toprim domain maps to 80 to 175 (STILIVEDSR…KVTRLARGLA (96 aa)).

The protein belongs to the RecR family.

May play a role in DNA repair. It seems to be involved in an RecBC-independent recombinational process of DNA repair. It may act with RecF and RecO. This is Recombination protein RecR from Streptococcus sanguinis (strain SK36).